The following is a 196-amino-acid chain: UPF0316 protein LBL_2483 (196 aa).

Helical transmembrane passes span 12–32 (YCVL…IGTI), 44–64 (IAAS…TQVI), and 70–90 (ALCY…GMIL).

Belongs to the UPF0316 family.

The protein resides in the cell membrane. The chain is UPF0316 protein LBL_2483 from Leptospira borgpetersenii serovar Hardjo-bovis (strain L550).